A 556-amino-acid chain; its full sequence is Formate--tetrahydrofolate ligase (556 aa).

65 to 72 provides a ligand contact to ATP; the sequence is TPAGEGKS.

It belongs to the formate--tetrahydrofolate ligase family.

The catalysed reaction is (6S)-5,6,7,8-tetrahydrofolate + formate + ATP = (6R)-10-formyltetrahydrofolate + ADP + phosphate. The protein operates within one-carbon metabolism; tetrahydrofolate interconversion. This chain is Formate--tetrahydrofolate ligase, found in Clostridium beijerinckii (strain ATCC 51743 / NCIMB 8052) (Clostridium acetobutylicum).